The primary structure comprises 193 residues: Xanthine phosphoribosyltransferase (193 aa).

Leu-20 and Asn-27 together coordinate xanthine. 129 to 133 is a 5-phospho-alpha-D-ribose 1-diphosphate binding site; the sequence is ANGKA. Lys-157 contacts xanthine.

This sequence belongs to the purine/pyrimidine phosphoribosyltransferase family. Xpt subfamily. As to quaternary structure, homodimer.

It localises to the cytoplasm. The catalysed reaction is XMP + diphosphate = xanthine + 5-phospho-alpha-D-ribose 1-diphosphate. The protein operates within purine metabolism; XMP biosynthesis via salvage pathway; XMP from xanthine: step 1/1. Converts the preformed base xanthine, a product of nucleic acid breakdown, to xanthosine 5'-monophosphate (XMP), so it can be reused for RNA or DNA synthesis. This Bifidobacterium longum (strain NCC 2705) protein is Xanthine phosphoribosyltransferase.